Consider the following 311-residue polypeptide: Mediator of RNA polymerase II transcription subunit 27 (311 aa).

Serine 132 carries the post-translational modification Phosphoserine. Residue lysine 134 is modified to N6-methyllysine.

Belongs to the Mediator complex subunit 27 family. As to quaternary structure, component of the Mediator complex, which is composed of MED1, MED4, MED6, MED7, MED8, MED9, MED10, MED11, MED12, MED13, MED13L, MED14, MED15, MED16, MED17, MED18, MED19, MED20, MED21, MED22, MED23, MED24, MED25, MED26, MED27, MED29, MED30, MED31, CCNC, CDK8 and CDC2L6/CDK11. The MED12, MED13, CCNC and CDK8 subunits form a distinct module termed the CDK8 module. Mediator containing the CDK8 module is less active than Mediator lacking this module in supporting transcriptional activation. Individual preparations of the Mediator complex lacking one or more distinct subunits have been variously termed ARC, CRSP, DRIP, PC2, SMCC and TRAP.

The protein resides in the nucleus. Its function is as follows. Component of the Mediator complex, a coactivator involved in the regulated transcription of nearly all RNA polymerase II-dependent genes. Mediator functions as a bridge to convey information from gene-specific regulatory proteins to the basal RNA polymerase II transcription machinery. Mediator is recruited to promoters by direct interactions with regulatory proteins and serves as a scaffold for the assembly of a functional preinitiation complex with RNA polymerase II and the general transcription factors. The polypeptide is Mediator of RNA polymerase II transcription subunit 27 (MED27) (Homo sapiens (Human)).